Here is a 316-residue protein sequence, read N- to C-terminus: Acetyl-coenzyme A carboxylase carboxyl transferase subunit alpha (316 aa).

Residues Leu36–Glu290 form the CoA carboxyltransferase C-terminal domain.

This sequence belongs to the AccA family. As to quaternary structure, acetyl-CoA carboxylase is a heterohexamer composed of biotin carboxyl carrier protein (AccB), biotin carboxylase (AccC) and two subunits each of ACCase subunit alpha (AccA) and ACCase subunit beta (AccD).

Its subcellular location is the cytoplasm. The enzyme catalyses N(6)-carboxybiotinyl-L-lysyl-[protein] + acetyl-CoA = N(6)-biotinyl-L-lysyl-[protein] + malonyl-CoA. It functions in the pathway lipid metabolism; malonyl-CoA biosynthesis; malonyl-CoA from acetyl-CoA: step 1/1. Its function is as follows. Component of the acetyl coenzyme A carboxylase (ACC) complex. First, biotin carboxylase catalyzes the carboxylation of biotin on its carrier protein (BCCP) and then the CO(2) group is transferred by the carboxyltransferase to acetyl-CoA to form malonyl-CoA. This chain is Acetyl-coenzyme A carboxylase carboxyl transferase subunit alpha, found in Thermus thermophilus (strain ATCC 27634 / DSM 579 / HB8).